Here is an 84-residue protein sequence, read N- to C-terminus: Large ribosomal subunit protein bL27 (84 aa).

The disordered stretch occupies residues 1-24; that stretch reads MAHKKGGGSSKNGRDSNSQRLGVK.

This sequence belongs to the bacterial ribosomal protein bL27 family.

The protein is Large ribosomal subunit protein bL27 of Leptospira borgpetersenii serovar Hardjo-bovis (strain JB197).